A 308-amino-acid chain; its full sequence is UPF0026 protein HP_0117 (308 aa).

Residues 18–248 enclose the Radical SAM core domain; the sequence is FGKSLGVDLS…SLPKRSITQA (231 aa). [4Fe-4S] cluster is bound by residues Cys33, Cys37, and Cys40.

This sequence belongs to the UPF0026 family. The cofactor is [4Fe-4S] cluster.

The polypeptide is UPF0026 protein HP_0117 (Helicobacter pylori (strain ATCC 700392 / 26695) (Campylobacter pylori)).